The primary structure comprises 217 residues: Uridylate kinase (217 aa).

6 to 10 (KLSGR) contributes to the ATP binding site. A UMP-binding site is contributed by Gly38. Residues Gly39 and Arg43 each contribute to the ATP site. Residues Asp60 and 107 to 113 (FQPGQST) contribute to the UMP site. Residues Asn134, Tyr139, and Asp142 each coordinate ATP.

This sequence belongs to the UMP kinase family. Homohexamer.

Its subcellular location is the cytoplasm. The catalysed reaction is UMP + ATP = UDP + ADP. The protein operates within pyrimidine metabolism; CTP biosynthesis via de novo pathway; UDP from UMP (UMPK route): step 1/1. Its activity is regulated as follows. Inhibited by UTP. Catalyzes the reversible phosphorylation of UMP to UDP. The polypeptide is Uridylate kinase (Pyrobaculum neutrophilum (strain DSM 2338 / JCM 9278 / NBRC 100436 / V24Sta) (Thermoproteus neutrophilus)).